A 209-amino-acid polypeptide reads, in one-letter code: Imidazoleglycerol-phosphate dehydratase (209 aa).

Belongs to the imidazoleglycerol-phosphate dehydratase family.

It localises to the cytoplasm. The catalysed reaction is D-erythro-1-(imidazol-4-yl)glycerol 3-phosphate = 3-(imidazol-4-yl)-2-oxopropyl phosphate + H2O. Its pathway is amino-acid biosynthesis; L-histidine biosynthesis; L-histidine from 5-phospho-alpha-D-ribose 1-diphosphate: step 6/9. The protein is Imidazoleglycerol-phosphate dehydratase of Microcystis aeruginosa (strain NIES-843 / IAM M-2473).